Here is a 128-residue protein sequence, read N- to C-terminus: 2-iminobutanoate/2-iminopropanoate deaminase (128 aa).

Arg-105 is a substrate binding site.

It belongs to the RutC family. As to quaternary structure, homotrimer.

The protein resides in the cytoplasm. It carries out the reaction 2-iminobutanoate + H2O = 2-oxobutanoate + NH4(+). It catalyses the reaction 2-iminopropanoate + H2O = pyruvate + NH4(+). It participates in amino-acid biosynthesis; L-isoleucine biosynthesis; 2-oxobutanoate from L-threonine. Its function is as follows. Accelerates the release of ammonia from reactive enamine/imine intermediates of the PLP-dependent threonine dehydratase (IlvA) in the low water environment of the cell. It catalyzes the deamination of enamine/imine intermediates to yield 2-ketobutyrate and ammonia. It is required for the detoxification of reactive intermediates of IlvA due to their highly nucleophilic abilities and to avoid they are captured by anthranilate phosphoribosyltransferase (TrpD) to generate PRA, an intermediate in the alternative pyrimidine biosynthetic (APB) pathway. Also required for full activity of IlvE which is involved in the isoleucine biosynthesis. RidA also accelerates the release of pyruvate produced by IlvA from L-serine. In Salmonella typhimurium (strain LT2 / SGSC1412 / ATCC 700720), this protein is 2-iminobutanoate/2-iminopropanoate deaminase.